We begin with the raw amino-acid sequence, 132 residues long: Small ribosomal subunit protein uS8 (132 aa).

The protein belongs to the universal ribosomal protein uS8 family. Part of the 30S ribosomal subunit. Contacts proteins S5 and S12.

Functionally, one of the primary rRNA binding proteins, it binds directly to 16S rRNA central domain where it helps coordinate assembly of the platform of the 30S subunit. The chain is Small ribosomal subunit protein uS8 from Geotalea uraniireducens (strain Rf4) (Geobacter uraniireducens).